The primary structure comprises 168 residues: Dual-action ribosomal maturation protein DarP (168 aa).

The protein belongs to the DarP family.

It is found in the cytoplasm. Its function is as follows. Member of a network of 50S ribosomal subunit biogenesis factors which assembles along the 30S-50S interface, preventing incorrect 23S rRNA structures from forming. Promotes peptidyl transferase center (PTC) maturation. This Neisseria meningitidis serogroup B (strain ATCC BAA-335 / MC58) protein is Dual-action ribosomal maturation protein DarP.